A 351-amino-acid polypeptide reads, in one-letter code: N-acetyl-gamma-glutamyl-phosphate reductase (351 aa).

Cys-154 is a catalytic residue.

It belongs to the NAGSA dehydrogenase family. Type 1 subfamily.

It localises to the cytoplasm. The catalysed reaction is N-acetyl-L-glutamate 5-semialdehyde + phosphate + NADP(+) = N-acetyl-L-glutamyl 5-phosphate + NADPH + H(+). It functions in the pathway amino-acid biosynthesis; L-arginine biosynthesis; N(2)-acetyl-L-ornithine from L-glutamate: step 3/4. Catalyzes the NADPH-dependent reduction of N-acetyl-5-glutamyl phosphate to yield N-acetyl-L-glutamate 5-semialdehyde. This chain is N-acetyl-gamma-glutamyl-phosphate reductase, found in Prochlorococcus marinus (strain MIT 9515).